A 572-amino-acid chain; its full sequence is 2-isopropylmalate synthase (572 aa).

Residues 31–305 (PIWMSTDLRD…DPGLDFSNIN (275 aa)) enclose the Pyruvate carboxyltransferase domain. Asp40, His244, His246, and Asn280 together coordinate Mg(2+). The regulatory domain stretch occupies residues 437-572 (NATPVHYVGH…MNDATESVGV (136 aa)).

Belongs to the alpha-IPM synthase/homocitrate synthase family. LeuA type 2 subfamily. In terms of assembly, homodimer. It depends on Mg(2+) as a cofactor.

Its subcellular location is the cytoplasm. It carries out the reaction 3-methyl-2-oxobutanoate + acetyl-CoA + H2O = (2S)-2-isopropylmalate + CoA + H(+). It functions in the pathway amino-acid biosynthesis; L-leucine biosynthesis; L-leucine from 3-methyl-2-oxobutanoate: step 1/4. Functionally, catalyzes the condensation of the acetyl group of acetyl-CoA with 3-methyl-2-oxobutanoate (2-ketoisovalerate) to form 3-carboxy-3-hydroxy-4-methylpentanoate (2-isopropylmalate). This chain is 2-isopropylmalate synthase, found in Paraburkholderia xenovorans (strain LB400).